The sequence spans 1048 residues: MMILWKRQRTLLKMLLMTLIMEETTTIKEEVFFMKKFVIILTISIAVLFAGCVSEEGSYEESKISEKSISSPLDIVPKSSEKVVYTKTEGFVDLLGENSEIVNAYKELIGKYGLSVDDIEYTIQADNTYVLKGYGLDEYKFMDELGLDYKEEKYNGANMLINENHNYAVAKYKNYLIHGNTEDVKRVIDTIKGDYPSITEKKEIKDMLSKVDDDYVIANIGRNYKGYYGAFIYLKGRNVEFDVVAVYNDVDDAKEQYEYVKEELEDELDNGNIKDYDIDRDGNIVVAKVIMSKEEFLGDYANKLGLNFGNEIKYNTENEYNTQTKEKSEFNHDNTNKVNKNINLEEPYNLIPNVFWASYVDVGKFSKVVKGKGVYDELNSILKCYGLSPDDVEFYMNLETANLIKTDKLTAKEYLKKLGYSYNEEYYGGATLLVYTTEVSDMVGKFAATNYKGYFIFGLKGGVEKVIDAINGKNNLVTEDENIREIINEMPKGYFAFKLYNQFDADGGEFYYDEGDKIVIKGLWICIDDEYAKKRKYIIENDYENYGYTDYNIEVDGNRVTTTLTIDKDEFGEYDGYTLVSSDWIGLKKLENCENVNEEEENQINEEQQTNVENEQQTEQQFENEDKETNTYELPLTWKELEVAGMDGVMFDFGNKKVTFEDWKYSPCEFRNPIIIDGNKIWCFGFSGGEYGYFTYNDNMGFDADVDDIILIEMPYNVKAVCDDFYGAGWFIEDDNGKLHHVIFDCPKETIMDKTGNVEIDLAKIKKDVVVANVDVDELMAGAEDNKNNYKIVIGWKGNKLYLITMEKDKFEDWAYNSKYEDGFDEPFPPVQIKEFEFNGNIIDARSDFRNYIIVATENGLYIITVYKREPDEFKITDSLKTNIECYAFDTGSGLLVYYDGSKVYYTDIKIKSESDNSDIYYIARNYEGGLNIDGVTGLSICHNYNWLGTQVEVAGDGWIKTYNIEFEAKKDAEGNSVYDENGNSIYIVKFEPKNVYYDEIYDKYYSISVPFAGKYIYRGDSGDSKNGRVEFRVYTTNNKLYLFGTNW.

The tract at residues 601–629 is disordered; it reads ENQINEEQQTNVENEQQTEQQFENEDKET. The segment covering 605–621 has biased composition (low complexity); that stretch reads NEEQQTNVENEQQTEQQ.

This is an uncharacterized protein from Methanocaldococcus jannaschii (strain ATCC 43067 / DSM 2661 / JAL-1 / JCM 10045 / NBRC 100440) (Methanococcus jannaschii).